Reading from the N-terminus, the 633-residue chain is Putative oligopeptide transporter HI_0561 (633 aa).

Transmembrane regions (helical) follow at residues 8-28 (GVTF…LKFF), 45-65 (SAGT…MGYW), 70-90 (FWQT…FTIP), 128-148 (IAYG…LRVM), 180-200 (IGIV…GVAV), 230-250 (IGVG…MKPM), 281-301 (MIYI…HFIA), 311-331 (ILLV…VAAA), 345-365 (PISG…VSIG), 379-399 (FLTA…CISN), 420-440 (VALI…LEIL), 483-503 (WTYI…DAFL), 515-535 (VIAV…VIVG), 564-584 (LFSA…AFII), and 604-624 (WDTI…VIFA).

The protein belongs to the oligopeptide OPT transporter family.

Its subcellular location is the cell membrane. The sequence is that of Putative oligopeptide transporter HI_0561 from Haemophilus influenzae (strain ATCC 51907 / DSM 11121 / KW20 / Rd).